Here is a 319-residue protein sequence, read N- to C-terminus: Putative ribose-phosphate pyrophosphokinase 2 (319 aa).

ATP-binding positions include 40–42 (DGE) and 99–100 (RQ). Residue histidine 133 coordinates Mg(2+). Residues aspartate 222 and 226–230 (NTGRT) contribute to the D-ribose 5-phosphate site.

It belongs to the ribose-phosphate pyrophosphokinase family. Class I subfamily. Homohexamer. The cofactor is Mg(2+).

The protein resides in the cytoplasm. The enzyme catalyses D-ribose 5-phosphate + ATP = 5-phospho-alpha-D-ribose 1-diphosphate + AMP + H(+). It participates in metabolic intermediate biosynthesis; 5-phospho-alpha-D-ribose 1-diphosphate biosynthesis; 5-phospho-alpha-D-ribose 1-diphosphate from D-ribose 5-phosphate (route I): step 1/1. Functionally, involved in the biosynthesis of the central metabolite phospho-alpha-D-ribosyl-1-pyrophosphate (PRPP) via the transfer of pyrophosphoryl group from ATP to 1-hydroxyl of ribose-5-phosphate (Rib-5-P). This is Putative ribose-phosphate pyrophosphokinase 2 from Streptococcus pneumoniae serotype 4 (strain ATCC BAA-334 / TIGR4).